We begin with the raw amino-acid sequence, 316 residues long: Glutamyl endopeptidase (316 aa).

The first 30 residues, 1 to 30 (MVSKKSVKRGLITGLIGISIYSLGMHPAQA), serve as a signal peptide directing secretion. A propeptide spanning residues 31-94 (APSPHTPVSS…SPAKAPYSIK (64 aa)) is cleaved from the precursor. The cysteines at positions 126 and 142 are disulfide-linked. Active-site charge relay system residues include histidine 141 and serine 261. Cysteine 275 and cysteine 279 are oxidised to a cystine.

This sequence belongs to the peptidase S1B family.

It localises to the secreted. It catalyses the reaction Preferential cleavage: Glu-|-Xaa, Asp-|-Xaa.. Specific for hydrolysis of peptide bonds on the carboxyl side of acidic amino acid residues, with a strong preference for Glu. The chain is Glutamyl endopeptidase (blaSE) from Bacillus licheniformis (strain ATCC 14580 / DSM 13 / JCM 2505 / CCUG 7422 / NBRC 12200 / NCIMB 9375 / NCTC 10341 / NRRL NRS-1264 / Gibson 46).